We begin with the raw amino-acid sequence, 432 residues long: Glutamate-1-semialdehyde 2,1-aminomutase (432 aa).

N6-(pyridoxal phosphate)lysine is present on lysine 271.

Belongs to the class-III pyridoxal-phosphate-dependent aminotransferase family. HemL subfamily. Homodimer. Requires pyridoxal 5'-phosphate as cofactor.

It localises to the cytoplasm. It catalyses the reaction (S)-4-amino-5-oxopentanoate = 5-aminolevulinate. The protein operates within porphyrin-containing compound metabolism; protoporphyrin-IX biosynthesis; 5-aminolevulinate from L-glutamyl-tRNA(Glu): step 2/2. It functions in the pathway porphyrin-containing compound metabolism; chlorophyll biosynthesis. The polypeptide is Glutamate-1-semialdehyde 2,1-aminomutase (Prochlorococcus marinus (strain MIT 9211)).